The primary structure comprises 332 residues: Abscisic acid-inducible protein kinase (332 aa).

Residues 1–8 (GSGNFGVA) and Lys23 contribute to the ATP site. In terms of domain architecture, Protein kinase spans 1–250 (GSGNFGVAKL…IPEIKNHPWF (250 aa)). Asp113 (proton acceptor) is an active-site residue.

The protein belongs to the protein kinase superfamily. Ser/Thr protein kinase family. In terms of processing, autophosphorylated.

The enzyme catalyses L-seryl-[protein] + ATP = O-phospho-L-seryl-[protein] + ADP + H(+). It carries out the reaction L-threonyl-[protein] + ATP = O-phospho-L-threonyl-[protein] + ADP + H(+). Functionally, involved in water-stress responses. In Triticum aestivum (Wheat), this protein is Abscisic acid-inducible protein kinase.